The primary structure comprises 521 residues: Small ribosomal subunit protein mL104 (rPPR9) (521 aa).

The transit peptide at 1-59 directs the protein to the mitochondrion; sequence MPPSLPSLQLRRLLLRSFISSSSVNTLQSQPRIISSKPLFSPLPPSRSSIFSTFPSRFF. PPR repeat units follow at residues 174 to 204, 210 to 240, 244 to 278, 279 to 313, 321 to 355, 356 to 390, 393 to 427, and 428 to 462; these read GGKT…MEND, DKES…TANE, DENI…GFEI, GTKA…LLEM, NTET…GCQP, DAET…GYGE, NKKE…GCKP, and GIKT…GIAV. Residues 480 to 495 show a composition bias toward basic and acidic residues; it reads EVDSNVKKRETLPEKT. The segment at 480 to 499 is disordered; the sequence is EVDSNVKKRETLPEKTARKK. The short motif at 486–503 is the Nuclear localization signal element; the sequence is KKRETLPEKTARKKKRLK.

Belongs to the PPR family. P subfamily. Interacts with NAP1;1 and TCP8. Able to bind mitochondrial RNA in vitro. Component of the mitochondrial ribosome small subunit. In terms of tissue distribution, expressed in root tips, lateral root primordia and leaf primordia. Highly detected in the mature pollen grains.

Its subcellular location is the mitochondrion matrix. The protein resides in the nucleus. Functionally, RNA-binding protein that functions in both mitochondrion and nucleus. In mitochondrion, it is associated with polysomes and may play a role in translation. Required during embryogenesis. In nucleus, might be involved in the regulation of its own gene expression. This Arabidopsis thaliana (Mouse-ear cress) protein is Small ribosomal subunit protein mL104 (rPPR9) (PNM1).